We begin with the raw amino-acid sequence, 725 residues long: Catalase-peroxidase (725 aa).

A cross-link (tryptophyl-tyrosyl-methioninium (Trp-Tyr) (with M-253)) is located at residues 99–227; it reads WHAAGTYRIA…LAAVMMGLIY (129 aa). Catalysis depends on His-100, which acts as the Proton acceptor. Residues 227-253 constitute a cross-link (tryptophyl-tyrosyl-methioninium (Tyr-Met) (with W-99)); the sequence is YVNPEGVDGNPDPLKTAHDIRITFSRM. His-268 lines the heme b pocket.

This sequence belongs to the peroxidase family. Peroxidase/catalase subfamily. As to quaternary structure, homodimer or homotetramer. Heme b serves as cofactor. Formation of the three residue Trp-Tyr-Met cross-link is important for the catalase, but not the peroxidase activity of the enzyme.

It catalyses the reaction H2O2 + AH2 = A + 2 H2O. The enzyme catalyses 2 H2O2 = O2 + 2 H2O. Its function is as follows. Bifunctional enzyme with both catalase and broad-spectrum peroxidase activity. The protein is Catalase-peroxidase of Picosynechococcus sp. (strain ATCC 27264 / PCC 7002 / PR-6) (Agmenellum quadruplicatum).